A 194-amino-acid polypeptide reads, in one-letter code: MEHIKISDAAQAHFRKLLESQEEGTNIRIFVVNPGTPNAECGVSYCPPSNVEENDSELKFNGFSAFIDDISYPFLEDAEIDYVTEELGTQLTLKAPNAKMRKVADDAPLIERVDYVIQTQINPQLASHGGRITLIEITDDGYAVLQFGGGCNGCSMVDVTLKDGVEKQLVEMFNGELKGAKDITEHQRGEHSYY.

2 residues coordinate [4Fe-4S] cluster: Cys151 and Cys154.

The protein belongs to the NfuA family. As to quaternary structure, homodimer. [4Fe-4S] cluster is required as a cofactor.

Functionally, involved in iron-sulfur cluster biogenesis. Binds a 4Fe-4S cluster, can transfer this cluster to apoproteins, and thereby intervenes in the maturation of Fe/S proteins. Could also act as a scaffold/chaperone for damaged Fe/S proteins. In Actinobacillus succinogenes (strain ATCC 55618 / DSM 22257 / CCUG 43843 / 130Z), this protein is Fe/S biogenesis protein NfuA.